The sequence spans 382 residues: Inactive anthranilate O-methyltransferase 1 (382 aa).

S-adenosyl-L-homocysteine contacts are provided by tyrosine 20, cysteine 61, asparagine 66, aspartate 102, leucine 103, serine 146, and tyrosine 147. Residues glutamate 268 and phenylalanine 270 each coordinate Mg(2+).

This sequence belongs to the methyltransferase superfamily. Type-7 methyltransferase family. SABATH subfamily.

In Zea mays (Maize), this protein is Inactive anthranilate O-methyltransferase 1 (AAMT1I).